Here is a 150-residue protein sequence, read N- to C-terminus: Ribosomal RNA large subunit methyltransferase H (150 aa).

S-adenosyl-L-methionine contacts are provided by residues alanine 100 and 118–123; that span reads LSEMTF.

It belongs to the RNA methyltransferase RlmH family. Homodimer.

Its subcellular location is the cytoplasm. It catalyses the reaction pseudouridine(1915) in 23S rRNA + S-adenosyl-L-methionine = N(3)-methylpseudouridine(1915) in 23S rRNA + S-adenosyl-L-homocysteine + H(+). Functionally, specifically methylates the pseudouridine at position 1915 (m3Psi1915) in 23S rRNA. The protein is Ribosomal RNA large subunit methyltransferase H of Helicobacter pylori (strain J99 / ATCC 700824) (Campylobacter pylori J99).